A 132-amino-acid polypeptide reads, in one-letter code: DNA-directed RNA polymerase subunit omega (132 aa).

A disordered region spans residues 76-105 (EVDEPEQDAASIAEGQLTSGSQDEDEMPET).

Belongs to the RNA polymerase subunit omega family. In terms of assembly, the RNAP catalytic core consists of 2 alpha, 1 beta, 1 beta' and 1 omega subunit. When a sigma factor is associated with the core the holoenzyme is formed, which can initiate transcription.

It carries out the reaction RNA(n) + a ribonucleoside 5'-triphosphate = RNA(n+1) + diphosphate. Its function is as follows. Promotes RNA polymerase assembly. Latches the N- and C-terminal regions of the beta' subunit thereby facilitating its interaction with the beta and alpha subunits. This Allorhizobium ampelinum (strain ATCC BAA-846 / DSM 112012 / S4) (Agrobacterium vitis (strain S4)) protein is DNA-directed RNA polymerase subunit omega.